Consider the following 287-residue polypeptide: 3-alpha-hydroxysteroid sulfotransferase (287 aa).

44–49 is a binding site for 3'-phosphoadenylyl sulfate; sequence KSGTNW. 2 residues coordinate substrate: Trp72 and Trp77. The active-site Proton acceptor is the His99. Residues Arg121, Ser129, Tyr184, 218–223, and 247–249 each bind 3'-phosphoadenylyl sulfate; these read SSFQFM and RKG.

This sequence belongs to the sulfotransferase 1 family. In terms of assembly, homodimer. Adrenal gland and liver.

It is found in the cytoplasm. The enzyme catalyses an alcohol + 3'-phosphoadenylyl sulfate = an alkyl sulfate + adenosine 3',5'-bisphosphate + H(+). Sulfotransferase that utilizes 3'-phospho-5'-adenylyl sulfate (PAPS) as sulfonate donor to catalyze the sulfonation of 3-alpha-hydroxyl groups of neutral steroids. The chain is 3-alpha-hydroxysteroid sulfotransferase (STD1) from Cavia porcellus (Guinea pig).